The sequence spans 226 residues: ATP-dependent dethiobiotin synthetase BioD (226 aa).

D13–L18 is a binding site for ATP. A Mg(2+)-binding site is contributed by T17. The active site involves K38. ATP-binding positions include D55, E117–G120, N177–R178, P206–V208, and E213. Mg(2+)-binding residues include D55 and E117.

This sequence belongs to the dethiobiotin synthetase family. Homodimer. Mg(2+) serves as cofactor.

The protein localises to the cytoplasm. It catalyses the reaction (7R,8S)-7,8-diammoniononanoate + CO2 + ATP = (4R,5S)-dethiobiotin + ADP + phosphate + 3 H(+). It participates in cofactor biosynthesis; biotin biosynthesis; biotin from 7,8-diaminononanoate: step 1/2. Its function is as follows. Catalyzes a mechanistically unusual reaction, the ATP-dependent insertion of CO2 between the N7 and N8 nitrogen atoms of 7,8-diaminopelargonic acid (DAPA, also called 7,8-diammoniononanoate) to form a ureido ring. In Aeromonas salmonicida (strain A449), this protein is ATP-dependent dethiobiotin synthetase BioD.